Reading from the N-terminus, the 1141-residue chain is MNIQERFSLRKSAVGLVSVSLLCAIYTSTVAADTVVTGVNEIIEESQVKDEVSIESEKNESLDGSNIEIVEEIADNIPSPVIAEGEVAVEMKVDRGTENVVSRNDTEVTTSEQNQIEVTETKEILNQTSYQTESGEQRQIIWAHGITPPAMEQSGGFVKEKYGDYLNYTAPFEAGKGYYDTNKSLNASFIDLNLCFAAVSSNMVHWWLEQNSSYVERYLKEKKGTVNVEENYAITDLRRYINSFQNQQNSRVFDMFKTYYGYRTNGFVSDALVDLFINGYKPKAQGGVNLEDSQLVPDSRGGFFYDVFKEKKLTNRIFSGSYERFGEDVRTVLESKGLLGLTYRTLGYATHIVTVWGAEYDNQGKIKAVYITDSDDQQEQIGLKRMGITRDASGNPRLNNHMKNNSAGALLDYVHTIRLGQDLWEEYFNPLAKAKETASQTLADTKKALDLSIQGQSELPESMRLIYLEKLNNLYNQGILSIQKAESSEMLSGALENGLNSLKSLDFPISEVGNALAPDLPVGDRSTVSDVDSLSSQETSSTNLEADTENAGIIADGTNQLHFPVEAQTTSSVEAEGDNVFEQEADTLPIIIENKDEFGSELSRNMQTSETDSLVVAVEEDVKNDEVAQVEELLESEKVENQSSELLSDTLIVESANDKEEDRVEAVVSEQPDSIPHQNVEISLVEPTNVETETVVTPINDAATPHGSPTYIDNSVTESVATPLEKDSIQAGETEIAEPTSSESTNVETETVVTPVNDVATPHGSPTYIDNSVTESVATPLEKDSIQAGETEIAEPTSSESTNVETETVVTPVNDVATPHGSPTYIDNSVTESVATPLEKDSIQAGETEIAEPTSSESTSVEAELVDNSEIHAATSSVTPCGSSAYADGSTTESVATPLEKDSIQTGNTEIAEPTSSKSTNVEAASVDNSEIHADASLTAVSSVNLDNPVIEPVAISLIGSKRDTNAEVEVSSLSKREVRKTNTDGLISVQSKVIKKELLESSLAEAGSPLLEATIAQSSNSNSTEIGMSYQNTVLLESNNTERQVSKAEIVMEHKETELVETVSSASEPVVLVENISQTSNNTIESGKNMGVQSQAGAKQILGVEQSSKVSTPTSRQIMGVGLLTLVLGSALGLLKKRRK.

The first 32 residues, 1 to 32 (MNIQERFSLRKSAVGLVSVSLLCAIYTSTVAA), serve as a signal peptide directing secretion. The active-site Nucleophile is the cysteine 195. Disordered regions lie at residues 518 to 544 (PDLP…STNL), 725 to 749 (EKDS…NVET), 781 to 805 (LEKD…TNVE), and 839 to 860 (EKDS…ESTS). Over residues 526–544 (STVSDVDSLSSQETSSTNL) the composition is skewed to polar residues. Low complexity-rich tracts occupy residues 738–749 (EPTSSESTNVET) and 795–805 (EPTSSESTNVE). The helical transmembrane segment at 1119–1136 (IMGVGLLTLVLGSALGLL) threads the bilayer.

This sequence belongs to the peptidase C66 family.

The protein resides in the cell membrane. Its subcellular location is the secreted. IgM cleavage is inhibited by iodoacetamide but not by AEBSF, bestatin, E-64, Z-LVG-CHN(2), or EDTA. Its function is as follows. Catalyzes the specific cleavage of porcine IgM bound to the bacterial surface. Can degrade only IgM but neither IgG nor IgA, and is host specific, as it exclusively cleaves porcine IgM but not IgM from six other species, including human, mouse and a closely related member of the Suidae family. Promotes survival in porcine blood. Is thus involved in a so-far-unknown mechanism of host-pathogen interaction at an early stage of the host immune response. The protein is IgM protease (ide) of Streptococcus suis (strain P1/7).